The primary structure comprises 243 residues: VQ motif-containing protein 33 (243 aa).

Over residues 1–16 (MEVSTSSMSSKPEQMQ) the composition is skewed to polar residues. A disordered region spans residues 1 to 49 (MEVSTSSMSSKPEQMQNPPPMISSPRFQPQIISPHHHDQHQHLSNPYPT). The VQ motif lies at 59 to 68 (FKQVVQMLTG). Disordered regions lie at residues 69-98 (SSTD…SIPP) and 138-162 (FTGG…SENI). Residues Ser-83 and Ser-95 each carry the phosphoserine modification. Residues 84-98 (PVNNNNKGSSFSIPP) show a composition bias toward polar residues. A Phosphothreonine modification is found at Thr-139. Phosphoserine is present on residues Ser-148, Ser-152, Ser-165, Ser-167, and Ser-178. Low complexity predominate over residues 149–162 (PRFSPRNSSSSENI). Residues 180–243 (VTPLRSNDDP…FPVASPARNS (64 aa)) form a disordered region. Thr-181 is modified (phosphothreonine). Polar residues predominate over residues 191 to 201 (NKSSPLSLGNS). Phosphoserine occurs at positions 218 and 221. Thr-222 bears the Phosphothreonine mark. The residue at position 238 (Ser-238) is a Phosphoserine.

Phosphorylated on serine and threonine residues by MPK6.

The protein localises to the nucleus. Its function is as follows. May modulate WRKY transcription factor activities. The chain is VQ motif-containing protein 33 from Arabidopsis thaliana (Mouse-ear cress).